A 2168-amino-acid chain; its full sequence is Bromodomain adjacent to zinc finger domain protein 2B (2168 aa).

8 disordered regions span residues 1–29 (MESGERLPSSAASSTTPTSSSTPSVASVV), 140–348 (FAPP…KQPQ), 409–428 (LKAGNKNTSEESSLLTSELR), 459–479 (SNPKATSSSPAHPKQTLENNH), 528–698 (STPF…LHIA), 719–740 (GTSSSTLTSSPHSGTSKRRRVT), 841–872 (MEGRRGRPPNPDRQRAREESRMRRRKGRPPNV), and 1021–1043 (RKKAEEKERLKQEKRDEKRLNKE). Residues 8–29 (PSSAASSTTPTSSSTPSVASVV) are compositionally biased toward low complexity. 2 stretches are compositionally biased toward polar residues: residues 146 to 163 (NHDSSSFHSRTSGKSNRN) and 171 to 193 (GSINGSNTSSVIGINTSVLSTTA). Low complexity-rich tracts occupy residues 194–204 (SSSMGQTKSTS) and 240–263 (ESSSNSDSDSGTSSDTSSEGISSS). The segment covering 264–291 (DSDDLEEDEEEEDQSIEESEDDDSDSES) has biased composition (acidic residues). Over residues 307–325 (SDPKADGQKATEKAQEKRI) the composition is skewed to basic and acidic residues. Positions 335 to 348 (SQTHSFQSQQKQPQ) are enriched in low complexity. Composition is skewed to polar residues over residues 461-479 (PKATSSSPAHPKQTLENNH) and 528-551 (STPFSSPVNLSTSGRRTPGNQTPV). Residues 592 to 605 (RGTDSDIPSSKDSE) show a composition bias toward basic and acidic residues. Residues 606–663 (DSNEDEEEDDEEEDEEDDEDDESDDSQSESDSNSESDTEGSEEEDDDDKDQDESDSDT) show a composition bias toward acidic residues. Residues 670-693 (MKLNKTTSSVKSPSMSLTGHSTPR) show a composition bias toward polar residues. Low complexity predominate over residues 720 to 732 (TSSSTLTSSPHSG). Residues 739–810 (VTDERELRIP…DNFSFSAKIR (72 aa)) form the MBD domain. A compositionally biased stretch (basic and acidic residues) spans 841-861 (MEGRRGRPPNPDRQRAREESR). Residues 883–1061 (AKLLRKLQAQ…ELEMAKELKK (179 aa)) adopt a coiled-coil conformation. The DDT domain occupies 1087–1152 (GSTFSDCLMV…LSAAVCDPGL (66 aa)). A disordered region spans residues 1265-1341 (KRDTSGGIDL…CEDEDEGDQA (77 aa)). Residues 1297-1321 (SDYDDDDDDDSDDQGDEDDEDEEDK) show a composition bias toward acidic residues. Residues 1322–1331 (EDKKGKKTDI) are compositionally biased toward basic and acidic residues. The stretch at 1334 to 1375 (DEDEGDQAASVEELEKQIEKLSKQQSQYRRKLFDASHSLRSV) forms a coiled coil. A Glycyl lysine isopeptide (Lys-Gly) (interchain with G-Cter in SUMO2) cross-link involves residue Lys1425. Lys1462 is modified (N6-acetyllysine). Residues Ser1465 and Ser1467 each carry the phosphoserine modification. Residues 1503 to 1533 (SGKHSLGSVQSTATQSNVEKADSNNLFNTGS) are compositionally biased toward polar residues. Disordered stretches follow at residues 1503-1542 (SGKHSLGSVQSTATQSNVEKADSNNLFNTGSSGPGKFYSP), 1582-1607 (SLVTPQSQPPSKSPSPTPAPLGSSAQ), and 1670-1694 (TSNVASSKSESPVPQNEKATSAQPA). A compositionally biased stretch (pro residues) spans 1588–1600 (SQPPSKSPSPTPA). Residues 1670-1692 (TSNVASSKSESPVPQNEKATSAQ) show a composition bias toward polar residues. At Ser1680 the chain carries Phosphoserine. The segment at 1931–1981 (KVYCQICRKGDNEELLLLCDGCDKGCHTYCHRPKITTIPDGDWFCPACIAK) adopts a PHD-type zinc-finger fold. The tract at residues 1998-2040 (KTNESKKGKKVTLTGDTEDEDSASTSSSLKRGNKDLKKRKMEE) is disordered. Phosphothreonine is present on Thr2014. At Ser2019 the chain carries Phosphoserine. Positions 2029–2040 (GNKDLKKRKMEE) are enriched in basic and acidic residues. The Bromo domain occupies 2060–2164 (RDDSKDLALC…KYFEKKWTDT (105 aa)).

This sequence belongs to the WAL family. Component of the BRF-1 ISWI chromatin remodeling complex, at least composed of SMARCA1 and BAZ2B, which regulates the spacing of histone octamers on the DNA template to facilitate access to DNA. Within the BRF-1 ISWI chromatin remodeling complex interacts with SMARCA1; the interaction is direct. Component of the BRF-5 ISWI chromatin remodeling complex, at least composed of SMARCA5/SNF2H and BAZ2B, which regulates the spacing of histone octamers on the DNA template to facilitate access to DNA. Within the BRF-5 ISWI chromatin remodeling complex interacts with SMARCA5/SNF2H; the interaction is direct. Interacts with acetylated lysine residues on histone H1.4, H2A, H2B, H3 and H4 (in vitro). Interacts with EHMT1. As to expression, expressed at varying levels in several tissues, whereas a smaller transcript was expressed specifically in testis.

The protein localises to the nucleus. In terms of biological role, regulatory subunit of the ATP-dependent BRF-1 and BRF-5 ISWI chromatin remodeling complexes, which form ordered nucleosome arrays on chromatin and facilitate access to DNA during DNA-templated processes such as DNA replication, transcription, and repair. Both complexes regulate the spacing of nucleosomes along the chromatin and have the ability to slide mononucleosomes to the center of a DNA template. The BRF-1 ISWI chromatin remodeling complex has a lower ATP hydrolysis rate than the BRF-5 ISWI chromatin remodeling complex. Chromatin reader protein, which may play a role in transcriptional regulation via interaction with ISWI. Involved in positively modulating the rate of age-related behavioral deterioration. Represses the expression of mitochondrial function-related genes, perhaps by occupying their promoter regions, working in concert with histone methyltransferase EHMT1. The chain is Bromodomain adjacent to zinc finger domain protein 2B (BAZ2B) from Homo sapiens (Human).